Reading from the N-terminus, the 502-residue chain is Histidine--tRNA ligase (502 aa).

It belongs to the class-II aminoacyl-tRNA synthetase family. In terms of assembly, homodimer.

The protein localises to the cytoplasm. It catalyses the reaction tRNA(His) + L-histidine + ATP = L-histidyl-tRNA(His) + AMP + diphosphate + H(+). This chain is Histidine--tRNA ligase, found in Brucella suis (strain ATCC 23445 / NCTC 10510).